The following is a 569-amino-acid chain: Sulfite reductase [NADPH] hemoprotein beta-component (569 aa).

Residues Cys433, Cys439, Cys478, and Cys482 each contribute to the [4Fe-4S] cluster site. Residue Cys482 coordinates siroheme.

The protein belongs to the nitrite and sulfite reductase 4Fe-4S domain family. In terms of assembly, alpha(8)-beta(8). The alpha component is a flavoprotein, the beta component is a hemoprotein. It depends on siroheme as a cofactor. [4Fe-4S] cluster serves as cofactor.

It carries out the reaction hydrogen sulfide + 3 NADP(+) + 3 H2O = sulfite + 3 NADPH + 4 H(+). The protein operates within sulfur metabolism; hydrogen sulfide biosynthesis; hydrogen sulfide from sulfite (NADPH route): step 1/1. Its function is as follows. Component of the sulfite reductase complex that catalyzes the 6-electron reduction of sulfite to sulfide. This is one of several activities required for the biosynthesis of L-cysteine from sulfate. This chain is Sulfite reductase [NADPH] hemoprotein beta-component, found in Buchnera aphidicola subsp. Acyrthosiphon pisum (strain Tuc7).